We begin with the raw amino-acid sequence, 173 residues long: Large ribosomal subunit protein uL10 (173 aa).

This sequence belongs to the universal ribosomal protein uL10 family. Part of the ribosomal stalk of the 50S ribosomal subunit. The N-terminus interacts with L11 and the large rRNA to form the base of the stalk. The C-terminus forms an elongated spine to which L12 dimers bind in a sequential fashion forming a multimeric L10(L12)X complex.

Its function is as follows. Forms part of the ribosomal stalk, playing a central role in the interaction of the ribosome with GTP-bound translation factors. The chain is Large ribosomal subunit protein uL10 from Bifidobacterium animalis subsp. lactis (strain AD011).